A 375-amino-acid chain; its full sequence is Probable pectin lyase B (375 aa).

The signal sequence occupies residues 1 to 19 (MKYAAFLPTIGALVSQAIA). Disulfide bonds link Cys82–Cys101 and Cys91–Cys225. Residue Asn128 is glycosylated (N-linked (GlcNAc...) asparagine). Arg255 is an active-site residue. An intrachain disulfide couples Cys321 to Cys329.

It belongs to the polysaccharide lyase 1 family.

It localises to the secreted. The catalysed reaction is Eliminative cleavage of (1-&gt;4)-alpha-D-galacturonan methyl ester to give oligosaccharides with 4-deoxy-6-O-methyl-alpha-D-galact-4-enuronosyl groups at their non-reducing ends.. In terms of biological role, pectinolytic enzymes consist of four classes of enzymes: pectin lyase, polygalacturonase, pectin methylesterase and rhamnogalacturonase. Among pectinolytic enzymes, pectin lyase is the most important in depolymerization of pectin, since it cleaves internal glycosidic bonds of highly methylated pectins. This chain is Probable pectin lyase B (pelB), found in Aspergillus fumigatus (strain CBS 144.89 / FGSC A1163 / CEA10) (Neosartorya fumigata).